The sequence spans 54 residues: Putative ATP synthase subunit epsilon, mitochondrial (54 aa).

This sequence belongs to the eukaryotic ATPase epsilon family. F-type ATPases have 2 components, CF(1) - the catalytic core - and CF(0) - the membrane proton channel. CF(1) has five subunits: alpha(3), beta(3), gamma(1), delta(1), epsilon(1). CF(0) seems to have nine subunits: a, b, c, d, e, f, g, F6 and 8 (or A6L).

Its subcellular location is the mitochondrion. It localises to the mitochondrion inner membrane. Its function is as follows. Mitochondrial membrane ATP synthase (F(1)F(0) ATP synthase or Complex V) produces ATP from ADP in the presence of a proton gradient across the membrane which is generated by electron transport complexes of the respiratory chain. F-type ATPases consist of two structural domains, F(1) - containing the extramembraneous catalytic core, and F(0) - containing the membrane proton channel, linked together by a central stalk and a peripheral stalk. During catalysis, ATP synthesis in the catalytic domain of F(1) is coupled via a rotary mechanism of the central stalk subunits to proton translocation. Part of the complex F(1) domain and of the central stalk which is part of the complex rotary element. Rotation of the central stalk against the surrounding alpha(3)beta(3) subunits leads to hydrolysis of ATP in three separate catalytic sites on the beta subunits. The polypeptide is Putative ATP synthase subunit epsilon, mitochondrial (Caenorhabditis elegans).